The sequence spans 359 residues: Guanine nucleotide-binding protein G(q) subunit alpha (359 aa).

S-palmitoyl cysteine attachment occurs at residues C9 and C10. The 322-residue stretch at 38 to 359 (RELKLLLLGT…QLNLKEYNLV (322 aa)) folds into the G-alpha domain. The segment at 41 to 54 (KLLLLGTGESGKST) is G1 motif. The GTP site is built by S50, G51, K52, S53, T54, S156, L180, R181, and R183. S53 provides a ligand contact to Mg(2+). Positions 178-186 (DVLRVRVPT) are G2 motif. T186 is a Mg(2+) binding site. The interval 201 to 210 (FRMVDVGGQR) is G3 motif. 5-glutamyl histamine is present on Q209. Positions 270 to 277 (ILFLNKKD) are G4 motif. GTP is bound by residues N274, K275, D277, and A331. Positions 329–334 (TCATDT) are G5 motif.

This sequence belongs to the G-alpha family. G(q) subfamily. In terms of assembly, g proteins are composed of 3 units; alpha, beta and gamma. The alpha chain contains the guanine nucleotide binding site. Interacts (GDP-bound form) with RIC8A (via C-terminus); promoting GNAQ folding and association with the plasma membrane. Binds NHERF1. Forms a complex with PECAM1 and BDKRB2. Interacts with GAS2L2. Palmitoylated by ZDHHC3 and ZDHHC7. Palmitoylation occurs in the Golgi and participates in the localization of GNAQ to the plasma membrane. Post-translationally, histaminylated at Gln-209 residues by TGM2.

The protein resides in the cell membrane. It is found in the golgi apparatus. Its subcellular location is the nucleus. The protein localises to the nucleus membrane. The catalysed reaction is GTP + H2O = GDP + phosphate + H(+). In terms of biological role, guanine nucleotide-binding proteins (G proteins) function as transducers downstream of G protein-coupled receptors (GPCRs) in numerous signaling cascades. The alpha chain contains the guanine nucleotide binding site and alternates between an active, GTP-bound state and an inactive, GDP-bound state. Signaling by an activated GPCR promotes GDP release and GTP binding. The alpha subunit has a low GTPase activity that converts bound GTP to GDP, thereby terminating the signal. Both GDP release and GTP hydrolysis are modulated by numerous regulatory proteins. Signaling is mediated via phospholipase C-beta-dependent inositol lipid hydrolysis for signal propagation: activates phospholipase C-beta: following GPCR activation, GNAQ activates PLC-beta (PLCB1, PLCB2, PLCB3 or PLCB4), leading to production of diacylglycerol (DAG) and inositol 1,4,5-trisphosphate (IP3). Required for platelet activation. Regulates B-cell selection and survival and is required to prevent B-cell-dependent autoimmunity. Regulates chemotaxis of BM-derived neutrophils and dendritic cells (in vitro). Transduces FFAR4 signaling in response to long-chain fatty acids (LCFAs). Together with GNA11, required for heart development. This Mus musculus (Mouse) protein is Guanine nucleotide-binding protein G(q) subunit alpha (Gnaq).